The following is a 145-amino-acid chain: Ribonuclease VapC24 (145 aa).

A PINc domain is found at 4 to 123 (IDTNILLYAQ…RHHGVDEFAT (120 aa)). 2 residues coordinate Mg(2+): D5 and D106.

Belongs to the PINc/VapC protein family. The cofactor is Mg(2+).

Its function is as follows. Toxic component of a type II toxin-antitoxin (TA) system. An RNase. Its cognate antitoxin is VapB24. This Mycobacterium tuberculosis (strain CDC 1551 / Oshkosh) protein is Ribonuclease VapC24.